The sequence spans 93 residues: Large ribosomal subunit protein uL23cz/uL23cy (93 aa).

It belongs to the universal ribosomal protein uL23 family. As to quaternary structure, part of the 50S ribosomal subunit.

It is found in the plastid. The protein resides in the chloroplast. Binds to 23S rRNA. The polypeptide is Large ribosomal subunit protein uL23cz/uL23cy (rpl23-A) (Phaseolus angularis (Azuki bean)).